Reading from the N-terminus, the 320-residue chain is Stress-involved WYL domain-containing regulator (320 aa).

Residues 7–65 form the HTH deoR-type domain; sequence TTGRVVQLLGLLQSRRVWTGEELAERLGVTGRSVRRDIERLRELGYPVHASKGQGGGYQ. Residues 24-43 constitute a DNA-binding region (H-T-H motif); that stretch reads WTGEELAERLGVTGRSVRRD. Residues 139 to 218 form the WYL domain; sequence DTAVAPDVLM…SDVRATGTTF (80 aa). The tract at residues 245–320 is WCX domain; that stretch reads VRYFAPEKVV…MADRLRRAVR (76 aa).

In terms of assembly, homodimer.

Transcriptional activator. Acts as a transcriptional activator of the MSMEG_1357-56 operon upon genotoxic stress. Controls adjacent genes that belong to the DinB/YfiT-like putative metalloenzymes superfamily by upregulating their expression in response to various genotoxic stress conditions, including exposure to H(2)O(2) or the natural antibiotic zeocin, as well as mitomycin C (MMC), diamide and UVC radiation. Upon genotoxic stress, upregulates two genes encoding proteins of the DinB/YfiT-like putative metalloenzymes superfamily, MSMEG_1357 and MSMEG_1356. Binds different forms of single-stranded DNA (ssDNA) with high affinity, primarily through its characteristic WYL domain. Binds nucleic acids with single-stranded regions, such as polyT 20mer ssDNA, 5' tailed, 3' tailed and fork DNA, but not ssRNA. In Mycolicibacterium smegmatis (strain ATCC 700084 / mc(2)155) (Mycobacterium smegmatis), this protein is Stress-involved WYL domain-containing regulator.